The primary structure comprises 608 residues: MQFQTEVNQLLQLMIHSLYSNKEIFLRELISNASDALDKLNFLSVSDDKYKSLKFEPKIEIKIDKDKKTLSISDNGIGMDKDDLINNLGTIAKSGTKSFLENLSGDAKKDSQLIGQFGVGFYSAFMVASKIEVLSKKALDDKAYLWSSDANGYEINDASKEEQGTSITLYLKDDEFANTYKIESIIEKYSNHIQFPIFMEKEEFTPAKEGEEEGKTELKISQINKANALWRMQKSSLKAEDYERFYEQNFHDSNKPLLYLHTKSEGKLEYNSLFFIPQNAPFDLFRVDYQSGLKLYVKRVFISDDDKELLPTYLRFVRGIIDVEDLPLNVSREILQENQILKGVKEASVKKILGELEKLKNNDKEKYLSFFKTFGKVLKEGLYGFGGEKDSLLKLMLYKSTKGENLRSLEEYKNDLQGEQKEIFYIAGNNESLLRTSPLLEEYKQKNIEVLLMDDEIDSLVTPMLEFEGLKFIAINQVEDKNELSDEEKNTFAPLVAKFKELLKDQVEDVRLTSRLKDSPSCIVYDKNKPDFAMQQLLKQMGQEQNFKPILEINPKHAIFTGLKNNESFSADIATLVLNMAKLSEGMGVDNPAEFNASLTKIINKAFS.

An a; substrate-binding region spans residues 1 to 332 (MQFQTEVNQL…VEDLPLNVSR (332 aa)). Residues 333-536 (EILQENQILK…KNKPDFAMQQ (204 aa)) form a b region. Positions 537-608 (LLKQMGQEQN…LTKIINKAFS (72 aa)) are c.

Belongs to the heat shock protein 90 family. Homodimer.

The protein resides in the cytoplasm. In terms of biological role, molecular chaperone. Has ATPase activity. The polypeptide is Chaperone protein HtpG (Campylobacter jejuni (strain RM1221)).